The primary structure comprises 242 residues: Exosome complex component ski6 (242 aa).

Belongs to the RNase PH family. Component of the RNA exosome complex. Specifically part of the catalytically inactive RNA exosome core complex (Exo-9) which may associate with the catalytic subunits rrp6 and dis3 in cytoplasmic- and nuclear-specific RNA exosome complex forms. Exo-9 is formed by a hexameric base ring of RNase PH domain-containing subunits and a cap ring consisting of csl4, rrp4 and rrp40.

The protein resides in the cytoplasm. Its subcellular location is the nucleus. It is found in the nucleolus. In terms of biological role, non-catalytic component of the RNA exosome complex which has 3'-&gt;5' exoribonuclease activity and participates in a multitude of cellular RNA processing and degradation events. In the nucleus, the RNA exosome complex is involved in proper maturation of stable RNA species such as rRNA, snRNA and snoRNA, in the elimination of RNA processing by-products and non-coding 'pervasive' transcripts, such as antisense RNA species and cryptic unstable transcripts (CUTs), and of mRNAs with processing defects, thereby limiting or excluding their export to the cytoplasm. In the cytoplasm, the RNA exosome complex is involved in general mRNA turnover and in RNA surveillance pathways, preventing translation of aberrant mRNAs. The catalytic inactive RNA exosome core complex of 9 subunits (Exo-9) is proposed to play a pivotal role in the binding and presentation of RNA for ribonucleolysis, and to serve as a scaffold for the association with catalytic subunits and accessory proteins or complexes. ski6 is part of the hexameric ring of RNase PH domain-containing subunits proposed to form a central channel which threads RNA substrates for degradation. The polypeptide is Exosome complex component ski6 (ski6) (Schizosaccharomyces pombe (strain 972 / ATCC 24843) (Fission yeast)).